The sequence spans 250 residues: ATP synthase subunit a (250 aa).

The next 6 helical transmembrane spans lie at 25–45 (VSFTNSAAFMVGIVALIFFFL), 84–104 (VFFPLVFSLFVFVFVANVIGL), 115–135 (IVVTAALALLVIGTVVIYGFY), 141–161 (FLHLFVPSGVPAFLLPFIVLI), 187–209 (ALKVFAFFVVGLGSAGFLGWLGA), and 223–243 (ELLVAILQAYVFAVLTSIYLN).

The protein belongs to the ATPase A chain family. F-type ATPases have 2 components, CF(1) - the catalytic core - and CF(0) - the membrane proton channel. CF(1) has five subunits: alpha(3), beta(3), gamma(1), delta(1), epsilon(1). CF(0) has three main subunits: a(1), b(2) and c(9-12). The alpha and beta chains form an alternating ring which encloses part of the gamma chain. CF(1) is attached to CF(0) by a central stalk formed by the gamma and epsilon chains, while a peripheral stalk is formed by the delta and b chains.

Its subcellular location is the cell inner membrane. Key component of the proton channel; it plays a direct role in the translocation of protons across the membrane. The protein is ATP synthase subunit a of Azorhizobium caulinodans (strain ATCC 43989 / DSM 5975 / JCM 20966 / LMG 6465 / NBRC 14845 / NCIMB 13405 / ORS 571).